Here is a 458-residue protein sequence, read N- to C-terminus: Peptidyl-prolyl cis-trans isomerase FKBP4 (458 aa).

N-acetylmethionine; in peptidyl-prolyl cis-trans isomerase FKBP4; alternate is present on Met1. Thr2 carries the post-translational modification N-acetylthreonine; in peptidyl-prolyl cis-trans isomerase FKBP4, N-terminally processed; partial. Residues 50–138 (GDRVFVHYTG…VFEVELFEFK (89 aa)) enclose the PPIase FKBP-type 1 domain. Phosphothreonine; by CK2 is present on Thr143. One can recognise a PPIase FKBP-type 2 domain in the interval 167–253 (GAMVEVALEG…RYEVHLKSFE (87 aa)). Tyr220 is modified (phosphotyrosine). The segment at 267–400 (LEQSNIVKER…TQLAVCQQRT (134 aa)) is interaction with tubulin. TPR repeat units follow at residues 270 to 303 (SNIVKERGTVYFKEGKYKQALLQYKKIVSWLEYE), 319 to 352 (LASHLNLAMCHLKLQAFSAAIESCNKALELDSNN), and 353 to 386 (EKGLFRRGEAHLAVNDFDLARADFQKVLQLYPSN). An N6-acetyllysine modification is found at Lys282. At Arg373 the chain carries Omega-N-methylarginine. Residues 423 to 458 (HKAKTEVAAGDHPTDAEMKGEPNNVAGNQAQVKTEA) are disordered. Thr436 carries the phosphothreonine modification. Lys441 is covalently cross-linked (Glycyl lysine isopeptide (Lys-Gly) (interchain with G-Cter in SUMO1)). Residues 447 to 458 (VAGNQAQVKTEA) show a composition bias toward polar residues.

Homodimer. Interacts with GLMN. Associates with HSP90AA1 and HSP70 in steroid hormone receptor complexes. Also interacts with peroxisomal phytanoyl-CoA alpha-hydroxylase (PHYH). Interacts with NR3C1 and dynein. Interacts with HSF1 in the HSP90 complex. Associates with tubulin. Interacts with MAPT/TAU. Interacts (via TPR domain) with S100A1, S100A2 and S100A6; the interaction is Ca(2+) dependent. Interaction with S100A1 and S100A2 (but not with S100A6) leads to inhibition of FKBP4-HSP90 interaction. Interacts with dynein; causes partially NR3C1 transport to the nucleus. Post-translationally, phosphorylation by CK2 results in loss of HSP90 binding activity. Widely detected in the brain (at protein level).

The protein resides in the cytoplasm. The protein localises to the cytosol. Its subcellular location is the mitochondrion. It is found in the nucleus. It localises to the cytoskeleton. The protein resides in the cell projection. The protein localises to the axon. The enzyme catalyses [protein]-peptidylproline (omega=180) = [protein]-peptidylproline (omega=0). With respect to regulation, inhibited by FK506. Its function is as follows. Immunophilin protein with PPIase and co-chaperone activities. Component of unligated steroid receptors heterocomplexes through interaction with heat-shock protein 90 (HSP90). Plays a role in the intracellular trafficking of heterooligomeric forms of steroid hormone receptors between cytoplasm and nuclear compartments. May have a protective role against oxidative stress in mitochondria. Also acts as a regulator of microtubule dynamics by inhibiting MAPT/TAU ability to promote microtubule assembly. The PPIase activity controls neuronal growth cones via regulation of TRPC1 channel opening. In Rattus norvegicus (Rat), this protein is Peptidyl-prolyl cis-trans isomerase FKBP4 (Fkbp4).